Consider the following 100-residue polypeptide: MITKEEAQKIAKLARLKFEEDTVEKFFTQLSTIMDMIDILNEIDCKDIEPLTSVCNMNARMREDAVTSSDLSSELLDNVSGNSAQLAKEVKYFITPKVVE.

This sequence belongs to the GatC family. As to quaternary structure, heterotrimer of A, B and C subunits.

It carries out the reaction L-glutamyl-tRNA(Gln) + L-glutamine + ATP + H2O = L-glutaminyl-tRNA(Gln) + L-glutamate + ADP + phosphate + H(+). The catalysed reaction is L-aspartyl-tRNA(Asn) + L-glutamine + ATP + H2O = L-asparaginyl-tRNA(Asn) + L-glutamate + ADP + phosphate + 2 H(+). Allows the formation of correctly charged Asn-tRNA(Asn) or Gln-tRNA(Gln) through the transamidation of misacylated Asp-tRNA(Asn) or Glu-tRNA(Gln) in organisms which lack either or both of asparaginyl-tRNA or glutaminyl-tRNA synthetases. The reaction takes place in the presence of glutamine and ATP through an activated phospho-Asp-tRNA(Asn) or phospho-Glu-tRNA(Gln). The sequence is that of Glutamyl-tRNA(Gln) amidotransferase subunit C from Rickettsia conorii (strain ATCC VR-613 / Malish 7).